Reading from the N-terminus, the 99-residue chain is Single insulin-like growth factor-binding domain protein-2 (99 aa).

A signal peptide spans 1–18 (MESLFIFAFGMMLSSASA). The 80-residue stretch at 19–98 (LSCIPCVPEE…GQEVGRCRKK (80 aa)) folds into the IGFBP N-terminal domain. O-linked (GalNAc...) serine glycosylation occurs at Ser-20. 6 cysteine pairs are disulfide-bonded: Cys-21/Cys-44, Cys-24/Cys-46, Cys-29/Cys-47, Cys-35/Cys-50, Cys-58/Cys-74, and Cys-68/Cys-95.

As to expression, expressed in hemocytes.

It localises to the secreted. Has a role in the innate immune system. This chain is Single insulin-like growth factor-binding domain protein-2, found in Cupiennius salei (American wandering spider).